A 188-amino-acid polypeptide reads, in one-letter code: Elongation factor P (188 aa).

K34 bears the N6-(3,6-diaminohexanoyl)-5-hydroxylysine mark.

Belongs to the elongation factor P family. Post-translationally, may be beta-lysylated on the epsilon-amino group of Lys-34 by the combined action of EpmA and EpmB, and then hydroxylated on the C5 position of the same residue by EpmC (if this protein is present). Lysylation is critical for the stimulatory effect of EF-P on peptide-bond formation. The lysylation moiety may extend toward the peptidyltransferase center and stabilize the terminal 3-CCA end of the tRNA. Hydroxylation of the C5 position on Lys-34 may allow additional potential stabilizing hydrogen-bond interactions with the P-tRNA.

The protein localises to the cytoplasm. It functions in the pathway protein biosynthesis; polypeptide chain elongation. Functionally, involved in peptide bond synthesis. Alleviates ribosome stalling that occurs when 3 or more consecutive Pro residues or the sequence PPG is present in a protein, possibly by augmenting the peptidyl transferase activity of the ribosome. Modification of Lys-34 is required for alleviation. In Pasteurella multocida (strain Pm70), this protein is Elongation factor P.